A 488-amino-acid chain; its full sequence is Ribulose bisphosphate carboxylase large chain (488 aa).

Residues N127 and T177 each contribute to the substrate site. The active-site Proton acceptor is the K179. K181 is a binding site for substrate. Mg(2+)-binding residues include K205, D207, and E208. An N6-carboxylysine modification is found at K205. H297 (proton acceptor) is an active-site residue. Substrate-binding residues include R298, H330, and S382.

The protein belongs to the RuBisCO large chain family. Type I subfamily. As to quaternary structure, heterohexadecamer of 8 large chains and 8 small chains. The cofactor is Mg(2+).

The protein localises to the plastid. It is found in the chloroplast. It carries out the reaction 2 (2R)-3-phosphoglycerate + 2 H(+) = D-ribulose 1,5-bisphosphate + CO2 + H2O. The enzyme catalyses D-ribulose 1,5-bisphosphate + O2 = 2-phosphoglycolate + (2R)-3-phosphoglycerate + 2 H(+). Functionally, ruBisCO catalyzes two reactions: the carboxylation of D-ribulose 1,5-bisphosphate, the primary event in carbon dioxide fixation, as well as the oxidative fragmentation of the pentose substrate in the photorespiration process. Both reactions occur simultaneously and in competition at the same active site. The polypeptide is Ribulose bisphosphate carboxylase large chain (Gracilaria tenuistipitata var. liui (Red alga)).